A 174-amino-acid chain; its full sequence is Small ribosomal subunit protein uS5 (174 aa).

One can recognise an S5 DRBM domain in the interval 16–79 (FSELIVSVRR…NAARKNMIRV (64 aa)).

The protein belongs to the universal ribosomal protein uS5 family. As to quaternary structure, part of the 30S ribosomal subunit. Contacts proteins S4 and S8.

In terms of biological role, with S4 and S12 plays an important role in translational accuracy. Located at the back of the 30S subunit body where it stabilizes the conformation of the head with respect to the body. The sequence is that of Small ribosomal subunit protein uS5 from Ehrlichia ruminantium (strain Gardel).